Reading from the N-terminus, the 127-residue chain is Putative platinum sensitivity protein 1 (127 aa).

The chain is Putative platinum sensitivity protein 1 (PSY1) from Saccharomyces cerevisiae (strain ATCC 204508 / S288c) (Baker's yeast).